The sequence spans 201 residues: Peptidyl-tRNA hydrolase (201 aa).

Residue tyrosine 15 participates in tRNA binding. The Proton acceptor role is filled by histidine 20. Positions 66, 68, and 114 each coordinate tRNA.

This sequence belongs to the PTH family. Monomer.

It is found in the cytoplasm. It catalyses the reaction an N-acyl-L-alpha-aminoacyl-tRNA + H2O = an N-acyl-L-amino acid + a tRNA + H(+). Hydrolyzes ribosome-free peptidyl-tRNAs (with 1 or more amino acids incorporated), which drop off the ribosome during protein synthesis, or as a result of ribosome stalling. Its function is as follows. Catalyzes the release of premature peptidyl moieties from peptidyl-tRNA molecules trapped in stalled 50S ribosomal subunits, and thus maintains levels of free tRNAs and 50S ribosomes. The protein is Peptidyl-tRNA hydrolase of Burkholderia mallei (strain ATCC 23344).